Here is a 387-residue protein sequence, read N- to C-terminus: 3-ketoacyl-CoA thiolase (387 aa).

The Acyl-thioester intermediate role is filled by Cys-91. Catalysis depends on proton acceptor residues His-343 and Cys-373.

The protein belongs to the thiolase-like superfamily. Thiolase family. Heterotetramer of two alpha chains (FadB) and two beta chains (FadA).

Its subcellular location is the cytoplasm. The catalysed reaction is an acyl-CoA + acetyl-CoA = a 3-oxoacyl-CoA + CoA. It functions in the pathway lipid metabolism; fatty acid beta-oxidation. Functionally, catalyzes the final step of fatty acid oxidation in which acetyl-CoA is released and the CoA ester of a fatty acid two carbons shorter is formed. This chain is 3-ketoacyl-CoA thiolase, found in Escherichia coli O9:H4 (strain HS).